A 167-amino-acid polypeptide reads, in one-letter code: Leptin (167 aa).

The N-terminal stretch at Met1–Ala21 is a signal peptide. A disulfide bond links Cys117 and Cys167.

Belongs to the leptin family.

The protein localises to the secreted. Its function is as follows. Key player in the regulation of energy balance and body weight control. Once released into the circulation, has central and peripheral effects by binding LEPR, found in many tissues, which results in the activation of several major signaling pathways. In the hypothalamus, acts as an appetite-regulating factor that induces a decrease in food intake and an increase in energy consumption by inducing anorexinogenic factors and suppressing orexigenic neuropeptides, also regulates bone mass and secretion of hypothalamo-pituitary-adrenal hormones. In the periphery, increases basal metabolism, influences reproductive function, regulates pancreatic beta-cell function and insulin secretion, is pro-angiogenic for endothelial cell and affects innate and adaptive immunity. In the arcuate nucleus of the hypothalamus, activates by depolarization POMC neurons inducing FOS and SOCS3 expression to release anorexigenic peptides and inhibits by hyperpolarization NPY neurons inducing SOCS3 with a consequent reduction on release of orexigenic peptides. In addition to its known satiety inducing effect, has a modulatory role in nutrient absorption. In the intestine, reduces glucose absorption by enterocytes by activating PKC and leading to a sequential activation of p38, PI3K and ERK signaling pathways which exerts an inhibitory effect on glucose absorption. Acts as a growth factor on certain tissues, through the activation of different signaling pathways increases expression of genes involved in cell cycle regulation such as CCND1, via JAK2-STAT3 pathway, or VEGFA, via MAPK1/3 and PI3K-AKT1 pathways. May also play an apoptotic role via JAK2-STAT3 pathway and up-regulation of BIRC5 expression. Pro-angiogenic, has mitogenic activity on vascular endothelial cells and plays a role in matrix remodeling by regulating the expression of matrix metalloproteinases (MMPs) and tissue inhibitors of metalloproteinases (TIMPs). In innate immunity, modulates the activity and function of neutrophils by increasing chemotaxis and the secretion of oxygen radicals. Increases phagocytosis by macrophages and enhances secretion of pro-inflammatory mediators. Increases cytotoxic ability of NK cells. Plays a pro-inflammatory role, in synergy with IL1B, by inducing NOS2 which promotes the production of IL6, IL8 and Prostaglandin E2, through a signaling pathway that involves JAK2, PI3K, MAP2K1/MEK1 and MAPK14/p38. In adaptive immunity, promotes the switch of memory T-cells towards T helper-1 cell immune responses. Increases CD4(+)CD25(-) T-cell proliferation and reduces autophagy during TCR (T-cell receptor) stimulation, through MTOR signaling pathway activation and BCL2 up-regulation. This Ursus thibetanus (Asiatic black bear) protein is Leptin (LEP).